Reading from the N-terminus, the 248-residue chain is Cobalt transport protein CbiM (248 aa).

The N-terminal stretch at 1–31 (MLKVIKKYRKFITFLMIGLVYTLAYPATAHA) is a signal peptide. 6 helical membrane passes run 39-59 (LPPR…IYGL), 75-95 (VMLA…LPSV), 107-127 (LGTV…VLLF), 139-159 (TLGA…YAVW), 173-195 (LFLC…LAIV), and 213-233 (IYAI…VIVY).

The protein belongs to the CbiM family. In terms of assembly, forms an energy-coupling factor (ECF) transporter complex composed of an ATP-binding protein (A component, CbiO), a transmembrane protein (T component, CbiQ) and 2 possible substrate-capture proteins (S components, CbiM and CbiN) of unknown stoichimetry.

It is found in the cell membrane. Its pathway is cofactor biosynthesis; adenosylcobalamin biosynthesis. Its function is as follows. Part of the energy-coupling factor (ECF) transporter complex CbiMNOQ involved in cobalt import. The protein is Cobalt transport protein CbiM of Limosilactobacillus reuteri (strain DSM 20016) (Lactobacillus reuteri).